The primary structure comprises 416 residues: Vacuole membrane protein KMS1 (416 aa).

N-acetylglycine is present on Gly-2. The Cytoplasmic portion of the chain corresponds to 2–60 (GSAGVASSSSDVAISALREKHEKEVENLTLTTQPLNTLKLFVEATIQYIKRSISYLLAH). The chain crosses the membrane as a helical span at residues 61-81 (GGWFILITTLLVVSGGLLVTV). Over 82-101 (DGPHGKHVEEVLEYVRYGLW) the chain is Lumenal. The helical transmembrane segment at 102 to 124 (WIALGVASSIGLGSGLHTFVLYL) threads the bilayer. Over 125–257 (GPHIALFTLK…WLLTHSQHLN (133 aa)) the chain is Cytoplasmic. Residues 258 to 278 (FFTVLVLASVPNPLFDLAGIM) traverse the membrane as a helical segment. Over 279–289 (CGQFGIPFWEF) the chain is Lumenal. Residues 290–312 (FLATLIGKAIIKTHIQTIFIICV) form a helical membrane-spanning segment. At 313–323 (CNNQLLDWMEN) the chain is on the cytoplasmic side. Residues 324-344 (ELIWILSHVPGLASMLPGLTA) traverse the membrane as a helical segment. Residues 345–372 (KLHAMKEKYIDAPSPVPSHIKVKKWDFS) are Lumenal-facing. The helical transmembrane segment at 373 to 393 (FASIWNGIVWLMLLNFFVKIV) threads the bilayer. Over 394 to 416 (TATAQRHLKKKQEKEMATLTHSD) the chain is Cytoplasmic.

The protein belongs to the VMP1 family.

It localises to the endoplasmic reticulum membrane. Involved in the early secretory pathway. Required for the correct export of secretory products from the endoplasmic reticulum (ER) and involved in the maintenance of ER integrity. The polypeptide is Vacuole membrane protein KMS1 (Arabidopsis thaliana (Mouse-ear cress)).